The sequence spans 292 residues: Protein/nucleic acid deglycase HchA (292 aa).

Over residues 1–12 (MSQDVNKLSKQP) the composition is skewed to polar residues. The segment at 1–23 (MSQDVNKLSKQPTPDKAEDNAFF) is disordered. Catalysis depends on Cys190, which acts as the Nucleophile.

The protein belongs to the peptidase C56 family. HchA subfamily.

The protein resides in the cytoplasm. The catalysed reaction is N(omega)-(1-hydroxy-2-oxopropyl)-L-arginyl-[protein] + H2O = lactate + L-arginyl-[protein] + H(+). It catalyses the reaction N(6)-(1-hydroxy-2-oxopropyl)-L-lysyl-[protein] + H2O = lactate + L-lysyl-[protein] + H(+). The enzyme catalyses S-(1-hydroxy-2-oxopropyl)-L-cysteinyl-[protein] + H2O = lactate + L-cysteinyl-[protein] + H(+). It carries out the reaction N(omega)-(1-hydroxy-2-oxoethyl)-L-arginyl-[protein] + H2O = L-arginyl-[protein] + glycolate + H(+). The catalysed reaction is N(6)-(1-hydroxy-2-oxoethyl)-L-lysyl-[protein] + H2O = glycolate + L-lysyl-[protein] + H(+). It catalyses the reaction S-(1-hydroxy-2-oxoethyl)-L-cysteinyl-[protein] + H2O = glycolate + L-cysteinyl-[protein] + H(+). The enzyme catalyses N(2)-(1-hydroxy-2-oxopropyl)-dGTP + H2O = lactate + dGTP + H(+). It carries out the reaction N(2)-(1-hydroxy-2-oxopropyl)-GTP + H2O = lactate + GTP + H(+). The catalysed reaction is N(2)-(1-hydroxy-2-oxopropyl)-GDP + H2O = lactate + GDP + H(+). It catalyses the reaction N(2)-(1-hydroxy-2-oxopropyl)-GMP + H2O = lactate + GMP + H(+). The enzyme catalyses N(2)-(1-hydroxy-2-oxoethyl)-dGTP + H2O = dGTP + glycolate + H(+). It carries out the reaction N(2)-(1-hydroxy-2-oxoethyl)-GTP + H2O = glycolate + GTP + H(+). The catalysed reaction is N(2)-(1-hydroxy-2-oxoethyl)-GDP + H2O = glycolate + GDP + H(+). It catalyses the reaction N(2)-(1-hydroxy-2-oxoethyl)-GMP + H2O = glycolate + GMP + H(+). The enzyme catalyses an N(2)-(1-hydroxy-2-oxopropyl)-guanosine in RNA + H2O = a guanosine in RNA + lactate + H(+). It carries out the reaction an N(2)-(1-hydroxy-2-oxopropyl)-2'-deoxyguanosine in DNA + H2O = a 2'-deoxyguanosine in DNA + lactate + H(+). The catalysed reaction is an N(2)-(1-hydroxy-2-oxoethyl)-guanosine in RNA + H2O = a guanosine in RNA + glycolate + H(+). It catalyses the reaction an N(2)-(1-hydroxy-2-oxoethyl)-2'-deoxyguanosine in DNA + H2O = a 2'-deoxyguanosine in DNA + glycolate + H(+). In terms of biological role, protein and nucleotide deglycase that catalyzes the deglycation of the Maillard adducts formed between amino groups of proteins or nucleotides and reactive carbonyl groups of glyoxals. Thus, functions as a protein deglycase that repairs methylglyoxal- and glyoxal-glycated proteins, and releases repaired proteins and lactate or glycolate, respectively. Deglycates cysteine, arginine and lysine residues in proteins, and thus reactivates these proteins by reversing glycation by glyoxals. Acts on early glycation intermediates (hemithioacetals and aminocarbinols), preventing the formation of Schiff bases and advanced glycation endproducts (AGE). Also functions as a nucleotide deglycase able to repair glycated guanine in the free nucleotide pool (GTP, GDP, GMP, dGTP) and in DNA and RNA. Is thus involved in a major nucleotide repair system named guanine glycation repair (GG repair), dedicated to reversing methylglyoxal and glyoxal damage via nucleotide sanitization and direct nucleic acid repair. Plays an important role in protecting cells from carbonyl stress. This Staphylococcus aureus (strain MRSA252) protein is Protein/nucleic acid deglycase HchA.